The following is a 254-amino-acid chain: Allene oxide cyclase 1, chloroplastic (254 aa).

The transit peptide at 1–78 (MASSTISLQS…QNLGNTENPR (78 aa)) directs the protein to the chloroplast. The span at 44–56 (SNGPGSSSPTSFT) shows a compositional bias: low complexity. The tract at residues 44–79 (SNGPGSSSPTSFTPKKKLTPTRALSQNLGNTENPRP) is disordered. Over residues 65–77 (RALSQNLGNTENP) the composition is skewed to polar residues.

This sequence belongs to the allene oxide cyclase family. As to expression, highly expressed in fully developed leaves.

It is found in the plastid. Its subcellular location is the chloroplast. It catalyses the reaction (9Z,13S,15Z)-12,13-epoxyoctadeca-9,11,15-trienoate = (9S,13S,15Z)-12-oxophyto-10,15-dienoate. Its function is as follows. Involved in the production of 12-oxo-phytodienoic acid (OPDA), a precursor of jasmonic acid. The sequence is that of Allene oxide cyclase 1, chloroplastic (AOC1) from Arabidopsis thaliana (Mouse-ear cress).